A 236-amino-acid polypeptide reads, in one-letter code: Purine nucleoside phosphorylase DeoD-type 2 (236 aa).

His5 is a binding site for a purine D-ribonucleoside. Phosphate is bound by residues Gly21, Arg25, Arg44, and 88–91; that span reads RIGS. Residues 180-182 and 204-205 contribute to the a purine D-ribonucleoside site; these read DME and SD. Asp205 serves as the catalytic Proton donor.

The protein belongs to the PNP/UDP phosphorylase family. Homohexamer; trimer of homodimers.

The catalysed reaction is a purine D-ribonucleoside + phosphate = a purine nucleobase + alpha-D-ribose 1-phosphate. The enzyme catalyses a purine 2'-deoxy-D-ribonucleoside + phosphate = a purine nucleobase + 2-deoxy-alpha-D-ribose 1-phosphate. In terms of biological role, catalyzes the reversible phosphorolytic breakdown of the N-glycosidic bond in the beta-(deoxy)ribonucleoside molecules, with the formation of the corresponding free purine bases and pentose-1-phosphate. In Vibrio cholerae serotype O1 (strain ATCC 39315 / El Tor Inaba N16961), this protein is Purine nucleoside phosphorylase DeoD-type 2.